Reading from the N-terminus, the 677-residue chain is Methionine--tRNA ligase (677 aa).

Residues 15–25 (PYANGSIHLGH) carry the 'HIGH' region motif. Residues Cys146, Cys149, Cys159, and Cys162 each contribute to the Zn(2+) site. The short motif at 333–337 (KMSKS) is the 'KMSKS' region element. Residue Lys336 participates in ATP binding. The tRNA-binding domain maps to 575 to 677 (DFAKVDLRVA…AGAKPGHQVK (103 aa)).

The protein belongs to the class-I aminoacyl-tRNA synthetase family. MetG type 1 subfamily. As to quaternary structure, homodimer. The cofactor is Zn(2+).

It is found in the cytoplasm. It carries out the reaction tRNA(Met) + L-methionine + ATP = L-methionyl-tRNA(Met) + AMP + diphosphate. Its function is as follows. Is required not only for elongation of protein synthesis but also for the initiation of all mRNA translation through initiator tRNA(fMet) aminoacylation. This Shigella flexneri serotype 5b (strain 8401) protein is Methionine--tRNA ligase.